The chain runs to 25 residues: M-poneritoxin-Nc2a (25 aa).

This sequence belongs to the ponericin-L family. As to expression, expressed by the venom gland.

The protein resides in the secreted. It localises to the target cell membrane. Membrane-perturbating peptide with multiple activities. It is insecticidal, since it induces reversible paralysis in insects (L.cuprina) after 1 hour, but fails to kill them. It shows moderate antibacterial activity against some Gram-positive and Gram-negative bacteria. It is also antiparasitic, since it moderately inhibits the larval development of the major pathogenic nematode of ruminants (H.contortus, IC(50)=23.2 uM), but fails to reduce the motility of adult males of the other nematode B.malayi. It also shows moderate cytotoxic activity against HEK293 cells (EC(50)=48-57 uM) but does not induce hemolysis in human erythrocytes. It also causes a moderate increase in intracellular calcium concentration on neuronal and epithelial cell lines, which supports a non-specific membrane perturbation mechanism of action. This chain is M-poneritoxin-Nc2a, found in Neoponera commutata (Large hunting ant).